A 210-amino-acid polypeptide reads, in one-letter code: 3-hexulose-6-phosphate synthase (210 aa).

This sequence belongs to the HPS/KGPDC family. HPS subfamily.

It carries out the reaction D-ribulose 5-phosphate + formaldehyde = D-arabino-hex-3-ulose 6-phosphate. It participates in one-carbon metabolism; formaldehyde assimilation via RuMP pathway; D-fructose 6-phosphate from D-ribulose 5-phosphate and formaldehyde: step 1/2. Functionally, catalyzes the condensation of ribulose 5-phosphate with formaldehyde to form 3-hexulose 6-phosphate. Together with HxlB, may act as a formaldehyde detoxification system. In Bacillus subtilis (strain 168), this protein is 3-hexulose-6-phosphate synthase (hxlA).